A 380-amino-acid chain; its full sequence is Cytochrome b (380 aa).

The next 4 membrane-spanning stretches (helical) occupy residues 34–54, 78–99, 114–134, and 179–199; these read FGSL…LLAM, WLIR…YLHI, WNTG…GYVL, and FFAL…IHLT. 2 residues coordinate heme b: His-84 and His-98. Heme b-binding residues include His-183 and His-197. Residue His-202 coordinates a ubiquinone. The next 4 membrane-spanning stretches (helical) occupy residues 227–247, 289–309, 321–341, and 348–368; these read LKDF…ALFS, LGGV…PFLH, ISQL…WVGS, and FIII…ILFP.

It belongs to the cytochrome b family. In terms of assembly, the cytochrome bc1 complex contains 11 subunits: 3 respiratory subunits (MT-CYB, CYC1 and UQCRFS1), 2 core proteins (UQCRC1 and UQCRC2) and 6 low-molecular weight proteins (UQCRH/QCR6, UQCRB/QCR7, UQCRQ/QCR8, UQCR10/QCR9, UQCR11/QCR10 and a cleavage product of UQCRFS1). This cytochrome bc1 complex then forms a dimer. The cofactor is heme b.

Its subcellular location is the mitochondrion inner membrane. In terms of biological role, component of the ubiquinol-cytochrome c reductase complex (complex III or cytochrome b-c1 complex) that is part of the mitochondrial respiratory chain. The b-c1 complex mediates electron transfer from ubiquinol to cytochrome c. Contributes to the generation of a proton gradient across the mitochondrial membrane that is then used for ATP synthesis. This Pelecanoides urinatrix (Common diving petrel) protein is Cytochrome b (MT-CYB).